The chain runs to 39 residues: Photosystem II reaction center protein J (39 aa).

A helical membrane pass occupies residues 7–27 (IPLWLVATIAGLGVIAVLGLF).

It belongs to the PsbJ family. As to quaternary structure, PSII is composed of 1 copy each of membrane proteins PsbA, PsbB, PsbC, PsbD, PsbE, PsbF, PsbH, PsbI, PsbJ, PsbK, PsbL, PsbM, PsbT, PsbX, PsbY, PsbZ, Psb30/Ycf12, peripheral proteins PsbO, CyanoQ (PsbQ), PsbU, PsbV and a large number of cofactors. It forms dimeric complexes.

It localises to the cellular thylakoid membrane. One of the components of the core complex of photosystem II (PSII). PSII is a light-driven water:plastoquinone oxidoreductase that uses light energy to abstract electrons from H(2)O, generating O(2) and a proton gradient subsequently used for ATP formation. It consists of a core antenna complex that captures photons, and an electron transfer chain that converts photonic excitation into a charge separation. This Microcystis aeruginosa (strain NIES-843 / IAM M-2473) protein is Photosystem II reaction center protein J.